The following is a 205-amino-acid chain: dTTP/UTP pyrophosphatase (205 aa).

The Proton acceptor role is filled by D81.

This sequence belongs to the Maf family. YhdE subfamily. It depends on a divalent metal cation as a cofactor.

It is found in the cytoplasm. It carries out the reaction dTTP + H2O = dTMP + diphosphate + H(+). It catalyses the reaction UTP + H2O = UMP + diphosphate + H(+). Nucleoside triphosphate pyrophosphatase that hydrolyzes dTTP and UTP. May have a dual role in cell division arrest and in preventing the incorporation of modified nucleotides into cellular nucleic acids. The polypeptide is dTTP/UTP pyrophosphatase (Agathobacter rectalis (strain ATCC 33656 / DSM 3377 / JCM 17463 / KCTC 5835 / VPI 0990) (Eubacterium rectale)).